A 196-amino-acid chain; its full sequence is Kunitz trypsin inhibitor 5 (196 aa).

Residues 1–19 (MSSLLYIFLLLAVFISHRG) form the signal peptide. A disulfide bridge links C156 with C167.

Belongs to the protease inhibitor I3 (leguminous Kunitz-type inhibitor) family.

Its subcellular location is the endoplasmic reticulum. Can inhibit both serine proteases and cysteine proteases. May be involved in the modulation of the proteases that participate in the hydrolysis of dietary proteins in the gut of spider mites. The polypeptide is Kunitz trypsin inhibitor 5 (Arabidopsis thaliana (Mouse-ear cress)).